We begin with the raw amino-acid sequence, 742 residues long: MMGTAHHNQTAGSALGVGVGDANDAVPGAGGGGYSDPDGGPISGVQRPPQVCWERFIQKKTIKVLLVDSDDSTRQVVSALLRHCMYEVIPAENGQQAWTYLEDMQNSIDLVLTEVVMPGVSGISLLSRIMNHNICKNIPVIMMSSNDAMGTVFKCLSKGAVDFLVKPIRKNELKNLWQHVWRRCHSSSGSGSESGIQTQKCAKSKSGDESNNNSGSNDDDDDDGVIMGLNARDGSDNGSGTQAQSSWTKRAVEIDSPQAMSPDQLADPPDSTCAQVIHLKSDICSNRWLPCTSNKNSKKQKETNDDFKGKDLEIGSPRNLNTAYQSSPNERSIKPTDRRNEYPLQNNSKEAAMENLEESSVRAADLIGSMAKNMDAQQAARATNAPNCSSKVPEGKDKNRDNIMPSLELSLKRSRSTGDDANAIQEEQRNVLRRSDLSAFTRYHTPVASNQGGTGFVGSCSPHDNISEAMKTDSAYNMKSNSDAAPIKQGSNGSSNNNDMGSTTKNVVTKPSTNKERVMSPSAVKANGHTSAFHPAQHWTSPANTTGKEKTDEVANNAAKRAQPGEVQSNLVQHPRPILHYVHFDVSRENGGSGAPQCGSSNVFDPPVEGHAANYGVNGSNSGSNNGSNGQNGSTTAVNAERPNMEIANGTINKSGPGGGNGSGSGSGNDMYLKRFTQREHRVAAVIKFRQKRKERNFGKKVRYQSRKRLAEQRPRVRGQFVRQAVQDQQQQGGGREAAADR.

Residues 63-181 form the Response regulatory domain; it reads KVLLVDSDDS…ELKNLWQHVW (119 aa). The span at 186-195 shows a compositional bias: low complexity; it reads SSSGSGSESG. Disordered regions lie at residues 186–249, 290–346, 375–402, 478–570, 590–671, and 697–742; these read SSSG…SWTK, PCTS…PLQN, DAQQ…NRDN, MKSN…VQSN, NGGS…GNDM, and NFGK…AADR. Positions 236 to 248 are enriched in polar residues; it reads DNGSGTQAQSSWT. Over residues 299–313 the composition is skewed to basic and acidic residues; sequence KQKETNDDFKGKDLE. A compositionally biased stretch (polar residues) spans 318–330; sequence RNLNTAYQSSPNE. Residues 331–341 are compositionally biased toward basic and acidic residues; the sequence is RSIKPTDRRNE. Positions 380–390 are enriched in polar residues; that stretch reads ARATNAPNCSS. Positions 490–502 are enriched in low complexity; sequence GSNGSSNNNDMGS. Over residues 503-512 the composition is skewed to polar residues; sequence TTKNVVTKPS. A compositionally biased stretch (low complexity) spans 618-634; that stretch reads NGSNSGSNNGSNGQNGS. Residues 656–667 show a composition bias toward gly residues; the sequence is GPGGGNGSGSGS. One can recognise a CCT domain in the interval 682-724; that stretch reads RVAAVIKFRQKRKERNFGKKVRYQSRKRLAEQRPRVRGQFVRQ. Basic residues predominate over residues 697–708; sequence NFGKKVRYQSRK. The span at 719–731 shows a compositional bias: low complexity; sequence GQFVRQAVQDQQQ.

It belongs to the ARR-like family.

The protein localises to the nucleus. In terms of biological role, controls photoperiodic flowering response. Seems to be one of the component of the circadian clock. Expression of several members of the ARR-like family is controlled by circadian rhythm. The particular coordinated sequential expression of PRR73, PRR37, PRR95, PRR59 and PPR1 result to circadian waves that may be at the basis of the endogenous circadian clock. In Oryza sativa subsp. indica (Rice), this protein is Two-component response regulator-like PRR37 (PRR37).